The sequence spans 400 residues: UDP-glucuronate:glycolipid 2-beta-glucuronosyltransferase (400 aa).

Asp-157 serves as the catalytic Proton acceptor. UDP-alpha-D-glucuronate contacts are provided by residues 230–231, 272–273, Tyr-292, and 306–310; these read SM, EM, and MKLLQ. The disordered stretch occupies residues 377–400; the sequence is PETRLYPHPPTAAPQLSSEAALSH. Polar residues predominate over residues 390–400; it reads PQLSSEAALSH.

This sequence belongs to the glycosyltransferase 70 family.

The protein resides in the cell inner membrane. It carries out the reaction alpha-D-Man-(1-&gt;3)-beta-D-Glc-(1-&gt;4)-alpha-D-Glc-1-di-trans,octa-cis-undecaprenyl diphosphate + UDP-alpha-D-glucuronate = beta-D-GlcA-(1-&gt;2)-alpha-D-Man-(1-&gt;3)-beta-D-Glc-(1-&gt;4)-alpha-D-Glc-di-trans,octa-cis-undecaprenyl diphosphate + UDP + H(+). Its pathway is glycan biosynthesis; xanthan biosynthesis. Its function is as follows. Catalyzes the transfer of a glucuronic acid (GlcA) residue from UDP-glucuronate to mannose-alpha-1,3-glucose-beta-1,4-glucose-P-P-polyisoprenyl to form the lipid-linked tetrasaccharide GlcA-Man-Glc(2)-PP-Pol, with a glucuronic acid-beta-mannose linkage. Is involved in the biosynthesis of the exopolysaccharide xanthan, since it catalyzes the fourth glycosylation step in the assembly of the pentasaccharide-P-P-polyisoprenyl repeating unit of xanthan. Is unable to use the trisaccharide acceptor freed from the pyrophosphate lipid moiety. Does not show specificity for the lipidic portion of the acceptor. Shows diminished activity when tested with 6-O-acetyl-mannose-alpha-1,3-glucose-beta-1,4-glucose-P-P-polyisoprenyl, a putative intermediate in the synthesis of xanthan; this could indicate that acetylation of the internal mannose takes place after the formation of the GumK product. The chain is UDP-glucuronate:glycolipid 2-beta-glucuronosyltransferase (gumK) from Xanthomonas campestris pv. campestris.